The following is a 29-amino-acid chain: Cytochrome b6-f complex subunit 8 (29 aa).

A helical membrane pass occupies residues 3-23 (IVSLAWAALMIVFTFSLSLVV).

Belongs to the PetN family. As to quaternary structure, the 4 large subunits of the cytochrome b6-f complex are cytochrome b6, subunit IV (17 kDa polypeptide, PetD), cytochrome f and the Rieske protein, while the 4 small subunits are PetG, PetL, PetM and PetN. The complex functions as a dimer.

The protein localises to the plastid membrane. Functionally, component of the cytochrome b6-f complex, which mediates electron transfer between photosystem II (PSII) and photosystem I (PSI), cyclic electron flow around PSI, and state transitions. This chain is Cytochrome b6-f complex subunit 8, found in Cuscuta exaltata (Tall dodder).